Consider the following 381-residue polypeptide: uncharacterized protein (381 aa).

Positions 176-292 (HAAGKIKKSK…EPMVDETPQN (117 aa)) are disordered. Residues 177–186 (AAGKIKKSKN) show a composition bias toward basic residues. Residues 187–212 (QKKDGTLSRPLGKKENKSVVKVKIEE) are compositionally biased toward basic and acidic residues. The span at 276–286 (DEEDEDEEPMV) shows a compositional bias: acidic residues.

This is an uncharacterized protein from Caenorhabditis elegans.